The sequence spans 475 residues: Aspartyl/glutamyl-tRNA(Asn/Gln) amidotransferase subunit B (475 aa).

It belongs to the GatB/GatE family. GatB subfamily. As to quaternary structure, heterotrimer of A, B and C subunits.

The enzyme catalyses L-glutamyl-tRNA(Gln) + L-glutamine + ATP + H2O = L-glutaminyl-tRNA(Gln) + L-glutamate + ADP + phosphate + H(+). The catalysed reaction is L-aspartyl-tRNA(Asn) + L-glutamine + ATP + H2O = L-asparaginyl-tRNA(Asn) + L-glutamate + ADP + phosphate + 2 H(+). Functionally, allows the formation of correctly charged Asn-tRNA(Asn) or Gln-tRNA(Gln) through the transamidation of misacylated Asp-tRNA(Asn) or Glu-tRNA(Gln) in organisms which lack either or both of asparaginyl-tRNA or glutaminyl-tRNA synthetases. The reaction takes place in the presence of glutamine and ATP through an activated phospho-Asp-tRNA(Asn) or phospho-Glu-tRNA(Gln). This chain is Aspartyl/glutamyl-tRNA(Asn/Gln) amidotransferase subunit B, found in Bacillus anthracis (strain A0248).